Consider the following 158-residue polypeptide: Glycine/sarcosine/betaine reductase complex component A (158 aa).

The active site involves Sec-44. Sec-44 is a non-standard amino acid (selenocysteine).

The protein belongs to the GrdA family. Monomer. Component of the glycine, sarcosine and betaine reductase complexes, together with components B and C.

It carries out the reaction acetyl phosphate + [thioredoxin]-disulfide + NH4(+) + H2O = [thioredoxin]-dithiol + glycine + phosphate + H(+). The catalysed reaction is acetyl phosphate + methylamine + [thioredoxin]-disulfide + H2O = sarcosine + [thioredoxin]-dithiol + phosphate + H(+). The enzyme catalyses acetyl phosphate + trimethylamine + [thioredoxin]-disulfide + H2O = glycine betaine + [thioredoxin]-dithiol + phosphate + H(+). Functionally, in the first step of glycine, betaine and sarcosine reductases, the substrate is bound to component PB via a Schiff base intermediate. Then the PB-activated substrate is nucleophilically attacked by the selenol anion of component PA to transform it to a carboxymethylated selenoether and the respective amine. By action of component PC, acetyl phosphate is formed, leaving component PA in its oxidized state. Finally component PA becomes reduced by the thioredoxin system to start a new catalytic cycle of reductive deamination. The sequence is that of Glycine/sarcosine/betaine reductase complex component A from Clostridium botulinum (strain ATCC 19397 / Type A).